A 147-amino-acid chain; its full sequence is TRAF-interacting protein with FHA domain-containing protein B (147 aa).

Residues 36–108 (LLVGRGQDTH…LHSVNRISFS (73 aa)) enclose the FHA domain.

Interacts with TIFA.

In terms of biological role, inhibits TIFA-mediated TRAF6 activation possibly by inducing a conformational change in TIFA. The protein is TRAF-interacting protein with FHA domain-containing protein B of Rattus norvegicus (Rat).